Consider the following 354-residue polypeptide: 3-dehydroquinate synthase (354 aa).

NAD(+)-binding positions include 66–71 (DGERYK), 100–104 (GVVGD), 124–125 (TT), Lys137, and Lys146. Positions 179, 242, and 259 each coordinate Zn(2+).

It belongs to the sugar phosphate cyclases superfamily. Dehydroquinate synthase family. Co(2+) is required as a cofactor. Zn(2+) serves as cofactor. Requires NAD(+) as cofactor.

The protein resides in the cytoplasm. It carries out the reaction 7-phospho-2-dehydro-3-deoxy-D-arabino-heptonate = 3-dehydroquinate + phosphate. It participates in metabolic intermediate biosynthesis; chorismate biosynthesis; chorismate from D-erythrose 4-phosphate and phosphoenolpyruvate: step 2/7. In terms of biological role, catalyzes the conversion of 3-deoxy-D-arabino-heptulosonate 7-phosphate (DAHP) to dehydroquinate (DHQ). This Halorhodospira halophila (strain DSM 244 / SL1) (Ectothiorhodospira halophila (strain DSM 244 / SL1)) protein is 3-dehydroquinate synthase.